Reading from the N-terminus, the 239-residue chain is Ribonuclease PH (239 aa).

Phosphate is bound by residues arginine 86 and 124–126 (GTR).

This sequence belongs to the RNase PH family. As to quaternary structure, homohexameric ring arranged as a trimer of dimers.

The enzyme catalyses tRNA(n+1) + phosphate = tRNA(n) + a ribonucleoside 5'-diphosphate. Phosphorolytic 3'-5' exoribonuclease that plays an important role in tRNA 3'-end maturation. Removes nucleotide residues following the 3'-CCA terminus of tRNAs; can also add nucleotides to the ends of RNA molecules by using nucleoside diphosphates as substrates, but this may not be physiologically important. Probably plays a role in initiation of 16S rRNA degradation (leading to ribosome degradation) during starvation. In Cupriavidus necator (strain ATCC 17699 / DSM 428 / KCTC 22496 / NCIMB 10442 / H16 / Stanier 337) (Ralstonia eutropha), this protein is Ribonuclease PH.